Consider the following 55-residue polypeptide: Large ribosomal subunit protein bL33 (55 aa).

Residues 1 to 11 show a composition bias toward basic and acidic residues; sequence MAKSGRDKIKL. The tract at residues 1 to 28 is disordered; sequence MAKSGRDKIKLESTAGTGHFYTTTKNKR. Positions 14-24 are enriched in polar residues; sequence TAGTGHFYTTT.

The protein belongs to the bacterial ribosomal protein bL33 family.

The sequence is that of Large ribosomal subunit protein bL33 from Janthinobacterium sp. (strain Marseille) (Minibacterium massiliensis).